A 294-amino-acid polypeptide reads, in one-letter code: ATP synthase gamma chain (294 aa).

This sequence belongs to the ATPase gamma chain family. In terms of assembly, F-type ATPases have 2 components, CF(1) - the catalytic core - and CF(0) - the membrane proton channel. CF(1) has five subunits: alpha(3), beta(3), gamma(1), delta(1), epsilon(1). CF(0) has three main subunits: a, b and c.

It is found in the cell inner membrane. Produces ATP from ADP in the presence of a proton gradient across the membrane. The gamma chain is believed to be important in regulating ATPase activity and the flow of protons through the CF(0) complex. This chain is ATP synthase gamma chain, found in Caulobacter sp. (strain K31).